The primary structure comprises 509 residues: MAAAAGMMLLGLLQAGGSVLGQAMEKVTGGNLLSMLLIACAFTLSLVYLFRLAVGHLVQLPAGAKSPPYIFSPIPFLGHAIAFGKSPIEFLENAYEKYGPVFSFTMVGKTFTYLLGSDAAALLFNSKNEDLNAEDVYSRLTTPVFGKGVAYDVPNPVFLEQKKMLKSGLNIAHFKQHVSIIEKETKEYFESWGESGEKNVFEALSELIILTASHCLHGKEVRSQLNEKVAQLYADLDGGFSHAAWLLPGWLPLPSFRRRDRAHREIKDIFYKAIQKRRQSQEKIDDILQTLLDATYKDGRPLTDDEVAGMLIGLLLAGQHTSSTTSAWMGFFLARDKTLQEKCYLEQKTVCGENLPPLTYDQLKDLNLLDRCIKETLRLRPPIMIMMRMARTPQTVAGYTIPPGHQVCVSPTVNQRLKDSWVERLDFNPDRYLQDNPASGEKFAYVPFGAGRHRCIGENFAYVQIKTIWSTMLRLYEFDLIDGYFPTVNYTTMIHTPENPVIRYKRRSK.

A helical membrane pass occupies residues 30–50; that stretch reads GNLLSMLLIACAFTLSLVYLF. Cys-455 contributes to the heme binding site.

It belongs to the cytochrome P450 family. Heme is required as a cofactor. In terms of processing, ubiquitinated by MARCHF6, leading to proteasomal degradation.

It is found in the endoplasmic reticulum membrane. It localises to the microsome membrane. It catalyses the reaction a 14alpha-methyl steroid + 3 reduced [NADPH--hemoprotein reductase] + 3 O2 = a Delta(14) steroid + formate + 3 oxidized [NADPH--hemoprotein reductase] + 4 H2O + 4 H(+). The enzyme catalyses lanosterol + 3 reduced [NADPH--hemoprotein reductase] + 3 O2 = 4,4-dimethyl-5alpha-cholesta-8,14,24-trien-3beta-ol + formate + 3 oxidized [NADPH--hemoprotein reductase] + 4 H2O + 4 H(+). The catalysed reaction is 24,25-dihydrolanosterol + 3 reduced [NADPH--hemoprotein reductase] + 3 O2 = 4,4-dimethyl-8,14-cholestadien-3beta-ol + formate + 3 oxidized [NADPH--hemoprotein reductase] + 4 H2O + 4 H(+). It carries out the reaction a 14alpha-methyl steroid + reduced [NADPH--hemoprotein reductase] + O2 = a 14alpha-hydroxymethyl steroid + oxidized [NADPH--hemoprotein reductase] + H2O + H(+). It catalyses the reaction a 14alpha-hydroxymethyl steroid + reduced [NADPH--hemoprotein reductase] + O2 = a 14alpha-formyl steroid + oxidized [NADPH--hemoprotein reductase] + 2 H2O + H(+). The enzyme catalyses a 14alpha-formyl steroid + reduced [NADPH--hemoprotein reductase] + O2 = a Delta(14) steroid + formate + oxidized [NADPH--hemoprotein reductase] + H2O + 2 H(+). The catalysed reaction is lanosterol + reduced [NADPH--hemoprotein reductase] + O2 = 32-hydroxylanosterol + oxidized [NADPH--hemoprotein reductase] + H2O + H(+). It carries out the reaction 32-hydroxylanosterol + reduced [NADPH--hemoprotein reductase] + O2 = 32-oxolanosterol + oxidized [NADPH--hemoprotein reductase] + 2 H2O + H(+). It catalyses the reaction 32-oxolanosterol + reduced [NADPH--hemoprotein reductase] + O2 = 4,4-dimethyl-5alpha-cholesta-8,14,24-trien-3beta-ol + formate + oxidized [NADPH--hemoprotein reductase] + H2O + 2 H(+). The enzyme catalyses 24,25-dihydrolanosterol + reduced [NADPH--hemoprotein reductase] + O2 = 32-hydroxy-24,25-dihydrolanosterol + oxidized [NADPH--hemoprotein reductase] + H2O + H(+). The catalysed reaction is 32-hydroxy-24,25-dihydrolanosterol + reduced [NADPH--hemoprotein reductase] + O2 = 32-oxo-24,25-dihydrolanosterol + oxidized [NADPH--hemoprotein reductase] + 2 H2O + H(+). It carries out the reaction 32-oxo-24,25-dihydrolanosterol + reduced [NADPH--hemoprotein reductase] + O2 = 4,4-dimethyl-8,14-cholestadien-3beta-ol + formate + oxidized [NADPH--hemoprotein reductase] + H2O + 2 H(+). It functions in the pathway steroid biosynthesis; zymosterol biosynthesis; zymosterol from lanosterol: step 1/6. Its activity is regulated as follows. Inhibited by azalanstat. Inhibited by azole antifungal agents ketoconazole, itraconazole and fluconazole. Sterol 14alpha-demethylase that plays a critical role in the cholesterol biosynthesis pathway, being cholesterol the major sterol component in mammalian membranes as well as a precursor for bile acid and steroid hormone synthesis. Cytochrome P450 monooxygenase that catalyzes the three-step oxidative removal of the 14alpha-methyl group (C-32) of sterols such as lanosterol (lanosta-8,24-dien-3beta-ol) and 24,25-dihydrolanosterol (DHL) in the form of formate, and converts the sterols to 4,4-dimethyl-5alpha-cholesta-8,14,24-trien-3beta-ol and 4,4-dimethyl-8,14-cholestadien-3beta-ol, respectively, which are intermediates of cholesterol biosynthesis. Can also demethylate substrates not intrinsic to mammals, such as eburicol (24-methylene-24,25-dihydrolanosterol), but at a lower rate than DHL. This chain is Lanosterol 14-alpha demethylase, found in Pongo abelii (Sumatran orangutan).